The sequence spans 278 residues: MKGFLLLLSFMTRIPMPKTDYDEEKLGKSMKYFPVVGIIVGFILLFFCIIFNFILKNISYSAVLPLMIIVVILTDLITTGALHLDGLADTFDGIFSYRSKHKMLEIMKDSRLGSNGALALILYFLLKFILLFSLTIESREAAVYAIITYPVVSRFCSVVSCASSPYARGSGMGKTFVDNIKTCGLIVATVITLLYTIGMLFMPFILFTNYSLPMQFMIRSVLIIVIIVGLLALFAFAFSKLIERKIGGITGDTLGALLEISSLVYIFLFLVIPTFFIG.

A run of 7 helical transmembrane segments spans residues 35–55 (VVGIIVGFILLFFCIIFNFIL), 62–82 (AVLPLMIIVVILTDLITTGAL), 116–136 (GALALILYFLLKFILLFSLTI), 141–161 (AAVYAIITYPVVSRFCSVVSC), 185–205 (LIVATVITLLYTIGMLFMPFI), 222–242 (LIIVIIVGLLALFAFAFSKLI), and 257–277 (LLEISSLVYIFLFLVIPTFFI).

Belongs to the CobS family. It depends on Mg(2+) as a cofactor.

The protein resides in the cell inner membrane. The catalysed reaction is alpha-ribazole + adenosylcob(III)inamide-GDP = adenosylcob(III)alamin + GMP + H(+). It carries out the reaction alpha-ribazole 5'-phosphate + adenosylcob(III)inamide-GDP = adenosylcob(III)alamin 5'-phosphate + GMP + H(+). It participates in cofactor biosynthesis; adenosylcobalamin biosynthesis; adenosylcobalamin from cob(II)yrinate a,c-diamide: step 7/7. Functionally, joins adenosylcobinamide-GDP and alpha-ribazole to generate adenosylcobalamin (Ado-cobalamin). Also synthesizes adenosylcobalamin 5'-phosphate from adenosylcobinamide-GDP and alpha-ribazole 5'-phosphate. This chain is Adenosylcobinamide-GDP ribazoletransferase, found in Fusobacterium nucleatum subsp. nucleatum (strain ATCC 25586 / DSM 15643 / BCRC 10681 / CIP 101130 / JCM 8532 / KCTC 2640 / LMG 13131 / VPI 4355).